The primary structure comprises 1331 residues: MTADELVFFVNGKKVVEKNADPETTLLAYLRRKLGLSGTKLGCGEGGCGACTVMLSKYDRFQNKIVHFSANACLAPICSLHHVAVTTVEGIGSTKSRLHPVQERIAKSHGSQCGFCTPGIVMSMYTLLRNQPEPTIEEIEDAFQGNLCRCTGYRPILQGFRTFARDGGCCGGSGNDLNCCMNQKTDHKITLSPSLFNPEEFTPLDPTQEPIFPPELLRLKDTPQKQLRFEGERVTWIQASTLQELLDLKAQDPEAKLVVGNTEIGIEMKFKNMLFPKMVCPAWIPEPVEHGPEGISFGASCPLSLVEKTLLDAVANLPAHQTEVFKGVLEQLRWFAGKQVKSVASIGGNIITASPISDLNPVFMASGAKLTIVSTGTRRTVRMDHTFFPAYRKTLLAPEEILLSIEIPYSREGEYFSAFKQASRREDDIAKVTSGMRVLFNPGTAQVKELALCYGGMHDRTVSALQTTRKQISNFWNEELLQNVCAGLAEELSLAPDAPGGMVEFRRTLTLSFFFKFYLTVLQKLGIQNSKDKCGKLDPTHASATLLFQKDPPANVQLFQEVPKGQCEEDMVGRPLPHLAAAMQASGEAVYCDDIPRYENELSLRLVTSTRAHAKIKSIDTSEAQKVPGFVCFISADDVPGSNITGIGNDEMVFAKDKVTCIGHIIGAVVTDTREHAQRAAQAVRITYEDLPAIITIEDAIAKDSFYEPELKIEKGNLTKGFSEADNIVSGELYIGGQEHFYLETHCTIAVPKGEAGEMELFVSTQNTTKTQSFVANMLGVPANRILVRVKRMGGGFGGKETRSTVVSTAVPLAAYKTGRPVRCMLDRDEDMLITGGRHPFLARYKVGFMKTGRVVALKVEHYSNAGNTLDLSQSIMERALFHMDNCYNIPNIRGTGRICKTNLPSNTAFRGFGGPQGMLIAEHWMSEVAVTCGLPAEEVRRKNMYKEGDLTHFNQKLEGFTLPRCWEECLASSQYHARKREADKFNEENCWKKRGLSIIPTKFGISFTVPFLNQAGALVHVYTDGSVLLTHGGTEMGQGLHTKMVQVASRALKIPTSKIYISETSTNTVPNTSPTAASVSTDINGQAVYEACQTILKRLEPFKKKNPSGSWEDWVTAAYLDAVSLSATGFYKTPNIGYSFETNSGNPFHYFSYGVACSEVEIDCLTGDHKNLRTDIVMDVGSSLNPAIDIGQVEGAFVQGLGLFTLEELHYSPEGSLHTRGPSTYKIPAFGSIPSEFRVSLLRDCPNKKAIYASKAVGEPPLFLAASIFFAIKDAICAARAGNPDCKTKKLFQLNSPATPEKIRNACVDQFTRLCVTGTAESCKPWSVRV.

A 2Fe-2S ferredoxin-type domain is found at 4-91; sequence DELVFFVNGK…HVAVTTVEGI (88 aa). Positions 43, 48, 51, 73, 113, 116, 148, and 150 each coordinate [2Fe-2S] cluster. The region spanning 229-412 is the FAD-binding PCMH-type domain; that stretch reads FEGERVTWIQ…LSIEIPYSRE (184 aa). Residues 257–264, F335, 345–349, D358, L402, and K420 each bind FAD; these read LVVGNTEI and SIGGN. A disulfide bond links C534 and C991. 2 residues coordinate Mo-molybdopterin: Q766 and F797. The substrate site is built by E801 and R879. A Mo-molybdopterin-binding site is contributed by R911. Substrate-binding residues include F913 and T1009. A1078 serves as a coordination point for Mo-molybdopterin. The active-site Proton acceptor is the E1260.

It belongs to the xanthine dehydrogenase family. Homodimer. Interacts with BTN1A1. FAD is required as a cofactor. It depends on Mo-molybdopterin as a cofactor. [2Fe-2S] cluster serves as cofactor. In terms of processing, subject to partial proteolysis; this alters the enzyme from the dehydrogenase form (D) to the oxidase form (O). Contains sulfhydryl groups that are easily oxidized (in vitro); this alters the enzyme from the dehydrogenase form (D) to the oxidase form (O).

The protein resides in the cytoplasm. Its subcellular location is the peroxisome. The protein localises to the secreted. The catalysed reaction is xanthine + NAD(+) + H2O = urate + NADH + H(+). The enzyme catalyses hypoxanthine + NAD(+) + H2O = xanthine + NADH + H(+). It catalyses the reaction xanthine + O2 + H2O = urate + H2O2. Can be converted from the dehydrogenase form (D) to the oxidase form (O) irreversibly by proteolysis or reversibly through the oxidation of sulfhydryl groups. Its function is as follows. Key enzyme in purine degradation. Catalyzes the oxidation of hypoxanthine to xanthine. Catalyzes the oxidation of xanthine to uric acid. Contributes to the generation of reactive oxygen species. The protein is Xanthine dehydrogenase/oxidase (XDH) of Felis catus (Cat).